The sequence spans 214 residues: Clavatol biosynthesis cluster protein B (214 aa).

Residues 1–17 (MAALSFQCLCVASAVRA) form the signal peptide. Asn-103 and Asn-204 each carry an N-linked (GlcNAc...) asparagine glycan.

It functions in the pathway secondary metabolite biosynthesis. Functionally, part of the cla gene cluster that produces clavatol and ortho-quinone methide. The clavatol biosynthesis cluster cla and the terrestric acid cluster tra are both involved in the production of peniphenones and penilactones. The non-reducing PKS claF is responsible for the formation of clavatol from successive condensations of 3 malonyl-CoA units, presumably with a simple acetyl-CoA starter unit, and 2 methylation steps. The esterase claE probably collaborates with claF by catalyzing the hydrolysis of ACP-bound acyl intermediates to free the ACP from stalled intermediates. The clavatol oxidase claD then converts clavatol to hydroxyclavatol. Spontaneous dehydration of hydroxyclavatol leads to the accumulation of the highly active ortho-quinone methide. On the other hand, the PKS-NRPS hybrid traA is involved in the formation of crustosic acid, with the help of traB and traD. The polyketide synthase module (PKS) of traA is responsible for the synthesis of the polyketide backbone via the condensation of an acetyl-CoA starter unit with 3 malonyl-CoA units. The downstream nonribosomal peptide synthetase (NRPS) module then amidates the carboxyl end of the polyketide with L-malic acid. Because traA lacks a designated enoylreductase (ER) domain, the required activity is provided the enoyl reductase traG. Crustosic acid undergoes decarboxylation and isomerization to the terrestric acid, catalyzed by the 2-oxoglutarate-dependent dioxygenase traH. Both acids are further converted to the 2 gamma-butyrolactones (R)-5-methyltetronic acid and (S)-5-carboxylmethyltetronic acid, with involvement of the cytochrome P450 monooxygenase claJ. Spontaneous addition of the methide to these gamma-butyrolactones leads to peniphenone D and penilactone D, which undergo again stereospecific attacking by methide to give penilactones A and B. The function of claB has not been investigated yet. The polypeptide is Clavatol biosynthesis cluster protein B (Penicillium crustosum (Blue mold fungus)).